A 463-amino-acid polypeptide reads, in one-letter code: Probable cysteine protease RD21B (463 aa).

A signal peptide spans 1-21; it reads MGFLKLSPMILLLAMIGVSYA. The propeptide at 22–137 is activation peptide; it reads MDMSIISYDE…DRYQARVGDA (116 aa). The N-linked (GlcNAc...) asparagine glycan is linked to asparagine 92. Cystine bridges form between cysteine 159–cysteine 201, cysteine 193–cysteine 234, cysteine 292–cysteine 343, cysteine 376–cysteine 388, and cysteine 382–cysteine 403. Cysteine 162 is an active-site residue. Residues histidine 298 and asparagine 318 contribute to the active site. Residues 354 to 463 constitute a propeptide, removed in mature form; that stretch reads KKGQNPPNPG…FWAKSRKHIA (110 aa). Asparagine 415 carries an N-linked (GlcNAc...) asparagine glycan.

The protein belongs to the peptidase C1 family. In terms of assembly, interacts with PRN2. Interacts with WSCP.

Probable thiol protease. The protein is Probable cysteine protease RD21B of Arabidopsis thaliana (Mouse-ear cress).